Here is a 126-residue protein sequence, read N- to C-terminus: Small ribosomal subunit protein uS13c (126 aa).

The segment at 97–126 (PLRGQRTRTNARTRRGGKKTVAGKKKAPRK) is disordered. Residues 101 to 126 (QRTRTNARTRRGGKKTVAGKKKAPRK) show a composition bias toward basic residues.

This sequence belongs to the universal ribosomal protein uS13 family. In terms of assembly, part of the 30S ribosomal subunit.

The protein localises to the plastid. It is found in the chloroplast. Located at the top of the head of the 30S subunit, it contacts several helices of the 16S rRNA. This chain is Small ribosomal subunit protein uS13c, found in Porphyra purpurea (Red seaweed).